Reading from the N-terminus, the 1357-residue chain is DNA-directed RNA polymerase subunit beta (1357 aa).

It belongs to the RNA polymerase beta chain family. As to quaternary structure, the RNAP catalytic core consists of 2 alpha, 1 beta, 1 beta' and 1 omega subunit. When a sigma factor is associated with the core the holoenzyme is formed, which can initiate transcription.

The enzyme catalyses RNA(n) + a ribonucleoside 5'-triphosphate = RNA(n+1) + diphosphate. Functionally, DNA-dependent RNA polymerase catalyzes the transcription of DNA into RNA using the four ribonucleoside triphosphates as substrates. The chain is DNA-directed RNA polymerase subunit beta from Pseudomonas syringae pv. syringae (strain B728a).